A 378-amino-acid polypeptide reads, in one-letter code: Succinyl-diaminopimelate desuccinylase (378 aa).

His68 lines the Zn(2+) pocket. Asp70 is an active-site residue. A Zn(2+)-binding site is contributed by Asp101. Catalysis depends on Glu135, which acts as the Proton acceptor. Positions 136, 164, and 350 each coordinate Zn(2+).

Belongs to the peptidase M20A family. DapE subfamily. Homodimer. Zn(2+) is required as a cofactor. It depends on Co(2+) as a cofactor.

It catalyses the reaction N-succinyl-(2S,6S)-2,6-diaminopimelate + H2O = (2S,6S)-2,6-diaminopimelate + succinate. It functions in the pathway amino-acid biosynthesis; L-lysine biosynthesis via DAP pathway; LL-2,6-diaminopimelate from (S)-tetrahydrodipicolinate (succinylase route): step 3/3. Its function is as follows. Catalyzes the hydrolysis of N-succinyl-L,L-diaminopimelic acid (SDAP), forming succinate and LL-2,6-diaminopimelate (DAP), an intermediate involved in the bacterial biosynthesis of lysine and meso-diaminopimelic acid, an essential component of bacterial cell walls. The protein is Succinyl-diaminopimelate desuccinylase of Acinetobacter baumannii (strain ACICU).